Reading from the N-terminus, the 594-residue chain is Developmental and secondary metabolism regulator veA (594 aa).

In terms of domain architecture, Velvet spans 24–220 (GRRLFYRIDV…AEQGTRVRIR (197 aa)). A Nuclear localization signal motif is present at residues 38-43 (EKCRAC). Disordered stretches follow at residues 40–59 (CRAC…VDPP) and 210–558 (MAEQ…DVEE). The segment covering 217–229 (VRIRRDVRMRRRD) has biased composition (basic residues). The segment covering 296-307 (APPPPNPPPPGF) has biased composition (pro residues). Residues 327–351 (SHSQYQQPTSSSSSSEQVSSVPQSP) are compositionally biased toward low complexity. The segment covering 352 to 362 (AYSSHAAQQHY) has biased composition (polar residues). A compositionally biased stretch (basic and acidic residues) spans 374-383 (PERRLSDHRS). The span at 384–403 (SQPNNHPQQSPHQHSYSHRS) shows a compositional bias: low complexity. Basic and acidic residues predominate over residues 405–416 (PQRERFMPDSRR). A PEST region spans residues 457–506 (VADTQATPHLPPIRWPRPNMNLPSPPSEHQEALQPLQPAPLHYESQTHQQ). The segment covering 523–538 (YSYGYSYSHNHSHGYG) has biased composition (low complexity).

The protein belongs to the velvet family. VeA subfamily. Component of the heterotrimeric velvet complex composed of LAEA, VEA and VELB; VEA acting as a bridging protein between LAEA and VELB.

It is found in the nucleus. The protein resides in the cytoplasm. Its function is as follows. Component of the velvet transcription factor complex that controls sexual/asexual developmental ratio in response to light, promoting sexual development in the darkness while stimulating asexual sporulation under illumination. The velvet complex acts as a global regulator for secondary metabolite gene expression. Regulates of the response to reactive oxygen species (ROS) stress. This is Developmental and secondary metabolism regulator veA from Pyricularia oryzae (strain 70-15 / ATCC MYA-4617 / FGSC 8958) (Rice blast fungus).